The sequence spans 1474 residues: SH3 and multiple ankyrin repeat domains protein 2 (1474 aa).

Over residues 66–76 (LSPQLLQQTPS) the composition is skewed to polar residues. The tract at residues 66–125 (LSPQLLQQTPSKPDGATKSLGSYAPGPRSRSPSLNRLGGAGEDGKRPQPPHWHVGSPFTP) is disordered. Residues 148–207 (VPGRLFVAIKPYQPQVDGEIPLHRGDRVKVLSIGEGGFWEGSARGHIGWFPAECVEEVQC) enclose the SH3 domain. Phosphoserine is present on Gln-162. The PDZ domain maps to 248–342 (TVVLQKKDNE…HLVLKVVTVT (95 aa)). Ser-373 is subject to Phosphoserine. Residues 392 to 413 (RKKKDKPEEIVPASKPSRTAEN) form a disordered region. Ser-457 carries the phosphoserine modification. Position 486 is a phosphothreonine (Thr-486). The interval 504-534 (LSMPDTSEDIPPPPQSVPPSPPPPSPTTYNC) is disordered. The segment covering 513-529 (IPPPPQSVPPSPPPPSP) has biased composition (pro residues). At Ser-586 the chain carries Phosphoserine. Disordered stretches follow at residues 659–920 (TIIV…ADDK), 947–995 (PVAG…PAAA), and 1057–1153 (PALA…ESMD). The segment covering 666–678 (STSSSGKSSQGSS) has biased composition (low complexity). The span at 711-722 (VRDREKRLEARR) shows a compositional bias: basic and acidic residues. Ser-724 carries the post-translational modification Phosphoserine. The segment covering 783-795 (LGGGEAGAQGEAG) has biased composition (gly residues). 2 stretches are compositionally biased toward low complexity: residues 811 to 823 (PAAA…PASP) and 833 to 846 (RLLD…LALS). 2 stretches are compositionally biased toward basic and acidic residues: residues 847 to 868 (ARDR…KADL) and 899 to 920 (RRQE…ADDK). Position 903 is a phosphothreonine (Thr-903). Polar residues predominate over residues 1075-1085 (SLNSSQPANST). Residues 1119–1130 (VDSRSSSDHHLE) are compositionally biased toward basic and acidic residues. Residues 1131–1151 (TTSTISTVSSISTLSSEGGES) are compositionally biased toward low complexity. Residues 1169 to 1175 (PPVPPKP) carry the SH3-binding motif. Disordered stretches follow at residues 1195–1216 (EDTD…SAQA) and 1260–1401 (NRGK…ISNK). The span at 1202 to 1212 (IPPPAPPPPPG) shows a compositional bias: pro residues. Positions 1291–1305 (STVSGTRSTTVTFTV) are enriched in low complexity. An O-linked (GlcNAc) threonine glycan is attached at Thr-1292. The segment covering 1307-1317 (PGTSQPITLQS) has biased composition (polar residues). A phosphoserine mark is found at Ser-1334 and Ser-1338. 2 stretches are compositionally biased toward low complexity: residues 1352-1363 (SAAAASPSPTLS) and 1385-1399 (RSRS…QPIS). In terms of domain architecture, SAM spans 1411–1474 (WTKPDVADWL…ERALKQLLDR (64 aa)).

This sequence belongs to the SHANK family. Is part of a complex with DLG4/PSD-95 and DLGAP1/GKAP. Interacts with CTTN/cortactin SH3 domain, DLGAP1/GKAP and alpha-latrotoxin receptor 1. Interacts with DNM2, DBNL, GRID2, BAIAP2, SLC9A3, PLCB3 and CFTR. Interacts with ABI1 (via SH3 domain). Interacts (via proline-rich region) with PDE4D isoform 5 (via N-terminal region). Interacts with PDE4D isoform 33, isoform 4, isoform 7, isoform 8 and isoform 9 but not isoform 32 and isoform 6. Interacts weakly with PDE4D isoform 31. Interacts with ABI1. As to expression, expressed in epithelial cells (at protein level). All isoforms except isoform 7 are expressed predominantly in brain, with highest levels in olfactory bulb, cerebral cortex, cerebellum, central gray matter and hippocampus. Moderate levels of expression are seen in the caudate putamen, thalamic nuclei and brain stem. In cerebellum primarily expressed in Purkinje cells. Isoform 7 is not expressed in brain but expressed in liver, cholangiocytes and thymus. Isoform 7 is present in pancreas, colonic mucosa and thymocytes (at protein level).

It localises to the apical cell membrane. It is found in the cytoplasm. The protein localises to the synapse. Its subcellular location is the postsynaptic density. The protein resides in the cell projection. It localises to the growth cone. It is found in the dendritic spine. Seems to be an adapter protein in the postsynaptic density (PSD) of excitatory synapses that interconnects receptors of the postsynaptic membrane including NMDA-type and metabotropic glutamate receptors, and the actin-based cytoskeleton. May play a role in the structural and functional organization of the dendritic spine and synaptic junction. This chain is SH3 and multiple ankyrin repeat domains protein 2 (Shank2), found in Rattus norvegicus (Rat).